Consider the following 73-residue polypeptide: DNA-directed RNA polymerase subunit epsilon (73 aa).

It belongs to the RNA polymerase subunit epsilon family. In terms of assembly, RNAP is composed of a core of 2 alpha, a beta and a beta' subunit. The core is associated with a delta subunit, and at least one of epsilon or omega. When a sigma factor is associated with the core the holoenzyme is formed, which can initiate transcription.

It catalyses the reaction RNA(n) + a ribonucleoside 5'-triphosphate = RNA(n+1) + diphosphate. A non-essential component of RNA polymerase (RNAP). The polypeptide is DNA-directed RNA polymerase subunit epsilon (Lactobacillus helveticus (strain DPC 4571)).